Reading from the N-terminus, the 336-residue chain is Fructose-1,6-bisphosphatase class 1 (336 aa).

Mg(2+) is bound by residues Glu-90, Asp-112, Leu-114, and Asp-115. Substrate is bound by residues 115–118, Asn-211, and Lys-277; that span reads DGSS. Glu-283 lines the Mg(2+) pocket.

Belongs to the FBPase class 1 family. Homotetramer. The cofactor is Mg(2+).

It localises to the cytoplasm. The enzyme catalyses beta-D-fructose 1,6-bisphosphate + H2O = beta-D-fructose 6-phosphate + phosphate. It participates in carbohydrate biosynthesis; gluconeogenesis. The sequence is that of Fructose-1,6-bisphosphatase class 1 from Pseudomonas savastanoi pv. phaseolicola (strain 1448A / Race 6) (Pseudomonas syringae pv. phaseolicola (strain 1448A / Race 6)).